An 801-amino-acid chain; its full sequence is Phenylalanine--tRNA ligase beta subunit (801 aa).

The region spanning 39-153 (AEGLSKLVVG…EGAIPGDSIF (115 aa)) is the tRNA-binding domain. The B5 domain maps to 406–481 (TEPVEVSTTL…RIYGYEKLPT (76 aa)). Mg(2+)-binding residues include aspartate 459, aspartate 465, glutamate 468, and glutamate 469. Residues 708–801 (TKYPSVSRDI…LVEKVNAEIR (94 aa)) enclose the FDX-ACB domain.

Belongs to the phenylalanyl-tRNA synthetase beta subunit family. Type 1 subfamily. As to quaternary structure, tetramer of two alpha and two beta subunits. Requires Mg(2+) as cofactor.

It localises to the cytoplasm. It carries out the reaction tRNA(Phe) + L-phenylalanine + ATP = L-phenylalanyl-tRNA(Phe) + AMP + diphosphate + H(+). In Streptococcus agalactiae serotype V (strain ATCC BAA-611 / 2603 V/R), this protein is Phenylalanine--tRNA ligase beta subunit.